The primary structure comprises 357 residues: 3-isopropylmalate dehydrogenase (357 aa).

The substrate site is built by arginine 97, arginine 107, arginine 135, and aspartate 224. Aspartate 224, aspartate 248, and aspartate 252 together coordinate Mg(2+). 282-294 (GSAPDIAGQDLAN) is a binding site for NAD(+).

The protein belongs to the isocitrate and isopropylmalate dehydrogenases family. LeuB type 1 subfamily. In terms of assembly, homodimer. Mg(2+) serves as cofactor. It depends on Mn(2+) as a cofactor.

It is found in the cytoplasm. The catalysed reaction is (2R,3S)-3-isopropylmalate + NAD(+) = 4-methyl-2-oxopentanoate + CO2 + NADH. It functions in the pathway amino-acid biosynthesis; L-leucine biosynthesis; L-leucine from 3-methyl-2-oxobutanoate: step 3/4. Functionally, catalyzes the oxidation of 3-carboxy-2-hydroxy-4-methylpentanoate (3-isopropylmalate) to 3-carboxy-4-methyl-2-oxopentanoate. The product decarboxylates to 4-methyl-2 oxopentanoate. The chain is 3-isopropylmalate dehydrogenase from Prochlorococcus marinus (strain MIT 9313).